The primary structure comprises 100 residues: Large ribosomal subunit protein uL23 (100 aa).

This sequence belongs to the universal ribosomal protein uL23 family. Part of the 50S ribosomal subunit. Contacts protein L29, and trigger factor when it is bound to the ribosome.

In terms of biological role, one of the early assembly proteins it binds 23S rRNA. One of the proteins that surrounds the polypeptide exit tunnel on the outside of the ribosome. Forms the main docking site for trigger factor binding to the ribosome. This chain is Large ribosomal subunit protein uL23, found in Rippkaea orientalis (strain PCC 8801 / RF-1) (Cyanothece sp. (strain PCC 8801)).